The following is a 603-amino-acid chain: Probable potassium transport system protein Kup (603 aa).

12 helical membrane-spanning segments follow: residues 15–35 (GLVF…IFLL), 43–63 (IIGV…VEYA), 94–114 (VAFV…DGVI), 135–155 (NIGQ…LFSV), 163–183 (ITWV…FSGI), 209–229 (GIIG…GEAL), 244–264 (AWRF…AFLI), 283–303 (ILYI…SQAM), 336–356 (IYIS…MLIF), 365–385 (AYGL…TSIF), 390–410 (NITK…FLLS), and 415–435 (IPHG…LILI).

The protein belongs to the HAK/KUP transporter (TC 2.A.72) family.

The protein localises to the cell membrane. The enzyme catalyses K(+)(in) + H(+)(in) = K(+)(out) + H(+)(out). Its function is as follows. Transport of potassium into the cell. Likely operates as a K(+):H(+) symporter. The chain is Probable potassium transport system protein Kup from Methanosarcina barkeri (strain Fusaro / DSM 804).